Reading from the N-terminus, the 169-residue chain is Chorismate pyruvate-lyase (169 aa).

Residues methionine 37, arginine 79, leucine 117, and glutamate 158 each coordinate substrate.

The protein belongs to the UbiC family. In terms of assembly, monomer.

It is found in the cytoplasm. It carries out the reaction chorismate = 4-hydroxybenzoate + pyruvate. Its pathway is cofactor biosynthesis; ubiquinone biosynthesis. Functionally, removes the pyruvyl group from chorismate, with concomitant aromatization of the ring, to provide 4-hydroxybenzoate (4HB) for the ubiquinone pathway. The polypeptide is Chorismate pyruvate-lyase (Proteus mirabilis (strain HI4320)).